A 603-amino-acid chain; its full sequence is Alpha-1,2-mannosyltransferase algn-9 (603 aa).

The segment at 1 to 25 (MVTHRRKGGSGPPQKPPPRIVDRSS) is disordered. Topologically, residues 1–108 (MVTHRRKGGS…EYSPVYAIRS (108 aa)) are lumenal. The helical transmembrane segment at 109-129 (YFYIYLHYIPASLFANLFGDT) threads the bilayer. A topological domain (cytoplasmic) is located at residue Lys-130. A helical membrane pass occupies residues 131 to 151 (IVVFTLIRLTIGLFCLLGEYY). Residues 152 to 166 (AFDAICKKINIATGR) lie on the Lumenal side of the membrane. Residues 167–187 (FFILFSIFSSGMFLASTAFVP) traverse the membrane as a helical segment. The Cytoplasmic portion of the chain corresponds to 188 to 195 (SSFCMAIT). A helical membrane pass occupies residues 196 to 216 (FYILGAYLNENWTAGIFCVAF). Residues 217–218 (ST) lie on the Lumenal side of the membrane. A helical transmembrane segment spans residues 219–239 (MVGWPFSAVLGLPIVADMLLL). Residues 240 to 245 (KGLRIR) lie on the Cytoplasmic side of the membrane. Residues 246–266 (FILTSLVIGLCIGGVQVITDS) traverse the membrane as a helical segment. Over 267-310 (HYFGKTVLAPLNIFLYNVVSGPGPSLYGEEPLSFYIKNLFNNWN) the chain is Lumenal. A helical membrane pass occupies residues 311–331 (IVIFAAPFGFPLSLAYFTKVW). Residues 332 to 343 (MSQDRNVALYQR) lie on the Cytoplasmic side of the membrane. Residues 344-364 (FAPIILLAVTTAAWLLIFGSQ) form a helical membrane-spanning segment. Over 365–370 (AHKEER) the chain is Lumenal. A helical membrane pass occupies residues 371–391 (FLFPIYPFIAFFAALALDATN). Topologically, residues 392-397 (RLCLKK) are cytoplasmic. The helical transmembrane segment at 398–418 (LGMDNILSILFILCFAILSAS) threads the bilayer. Topologically, residues 419-603 (RTYSIHNNYG…TCTLYRKSNL (185 aa)) are lumenal. Residue Asn-443 is glycosylated (N-linked (GlcNAc...) asparagine).

This sequence belongs to the glycosyltransferase 22 family.

It localises to the endoplasmic reticulum membrane. The catalysed reaction is an alpha-D-Man-(1-&gt;2)-alpha-D-Man-(1-&gt;2)-alpha-D-Man-(1-&gt;3)-[alpha-D-Man-(1-&gt;3)-alpha-D-Man-(1-&gt;6)]-beta-D-Man-(1-&gt;4)-beta-D-GlcNAc-(1-&gt;4)-alpha-D-GlcNAc-diphospho-di-trans,poly-cis-dolichol + a di-trans,poly-cis-dolichyl beta-D-mannosyl phosphate = an alpha-D-Man-(1-&gt;2)-alpha-D-Man-(1-&gt;2)-alpha-D-Man-(1-&gt;3)-[alpha-D-Man-(1-&gt;2)-alpha-D-Man-(1-&gt;3)-alpha-D-Man-(1-&gt;6)]-beta-D-Man-(1-&gt;4)-beta-D-GlcNAc-(1-&gt;4)-alpha-D-GlcNAc-diphospho-di-trans,poly-cis-dolichol + a di-trans,poly-cis-dolichyl phosphate + H(+). The enzyme catalyses an alpha-D-Man-(1-&gt;2)-alpha-D-Man-(1-&gt;2)-alpha-D-Man-(1-&gt;3)-[alpha-D-Man-(1-&gt;2)-alpha-D-Man-(1-&gt;3)-[alpha-D-Man-(1-&gt;6)]-alpha-D-Man-(1-&gt;6)]-beta-D-Man-(1-&gt;4)-beta-D-GlcNAc-(1-&gt;4)-alpha-D-GlcNAc-diphospho-di-trans,poly-cis-dolichol + a di-trans,poly-cis-dolichyl beta-D-mannosyl phosphate = an alpha-D-Man-(1-&gt;2)-alpha-D-Man-(1-&gt;2)-alpha-D-Man-(1-&gt;3)-[alpha-D-Man-(1-&gt;2)-alpha-D-Man-(1-&gt;3)-[alpha-D-Man-(1-&gt;2)-alpha-D-Man-(1-&gt;6)]-alpha-D-Man-(1-&gt;6)]-beta-D-Man-(1-&gt;4)-beta-D-GlcNAc-(1-&gt;4)-alpha-D-GlcNAc-diphospho-di-trans,poly-cis-dolichol + a di-trans,poly-cis-dolichyl phosphate + H(+). It functions in the pathway protein modification; protein glycosylation. Its function is as follows. Catalyzes the transfer of mannose from Dol-P-Man to lipid-linked oligosaccharides. The sequence is that of Alpha-1,2-mannosyltransferase algn-9 from Caenorhabditis elegans.